Consider the following 239-residue polypeptide: Protein canopy homolog 4 (239 aa).

The first 20 residues, 1 to 20, serve as a signal peptide directing secretion; sequence MGPVRLGTLLFILTVYGAWA. Cystine bridges form between cysteine 37/cysteine 195, cysteine 40/cysteine 183, and cysteine 93/cysteine 155. The disordered stretch occupies residues 199–239; it reads TWTGKEKITDGQEKTEEEEQDQEEEEMTNTPVHSQHDPEDL. Residues 201–212 show a composition bias toward basic and acidic residues; sequence TGKEKITDGQEK. The segment covering 213–225 has biased composition (acidic residues); it reads TEEEEQDQEEEEM.

Belongs to the canopy family. As to quaternary structure, interacts with TLR4.

The protein resides in the secreted. Plays a role in the regulation of the cell surface expression of TLR4. The sequence is that of Protein canopy homolog 4 (CNPY4) from Bos taurus (Bovine).